The following is a 341-amino-acid chain: Tryptophan--tRNA ligase (341 aa).

ATP-binding positions include 11–13 (RPT) and 19–20 (GH). Positions 12-20 (PTGKLHIGH) match the 'HIGH' region motif. An L-tryptophan-binding site is contributed by D140. ATP contacts are provided by residues 152 to 154 (GED), L193, and 201 to 205 (KMSKS). A 'KMSKS' region motif is present at residues 201-205 (KMSKS).

The protein belongs to the class-I aminoacyl-tRNA synthetase family. As to quaternary structure, homodimer.

Its subcellular location is the cytoplasm. It catalyses the reaction tRNA(Trp) + L-tryptophan + ATP = L-tryptophyl-tRNA(Trp) + AMP + diphosphate + H(+). Catalyzes the attachment of tryptophan to tRNA(Trp). This Clostridium longisporum protein is Tryptophan--tRNA ligase.